The following is a 465-amino-acid chain: Purple acid phosphatase 2 (465 aa).

The N-terminal stretch at 1 to 32 (MGASRTGCYLLAVVLAAVMNAAIAGITSSFIR) is a signal peptide. 2 N-linked (GlcNAc...) asparagine glycosylation sites follow: N110 and N138. D164 contacts Fe cation. N-linked (GlcNAc...) asparagine glycosylation occurs at N172. Fe cation-binding residues include D193 and Y196. Residue D193 coordinates Mn(2+). N230 lines the Mn(2+) pocket. Substrate is bound at residue N230. N-linked (GlcNAc...) asparagine glycosylation occurs at N303. Residue H315 coordinates Mn(2+). H325 serves as the catalytic Proton donor. A Mn(2+)-binding site is contributed by H352. Residue 352–354 (HVH) coordinates substrate. H354 contacts Fe cation. 2 N-linked (GlcNAc...) asparagine glycosylation sites follow: N400 and N425.

It belongs to the metallophosphoesterase superfamily. Purple acid phosphatase family. Homodimer; disulfide-linked. Fe cation serves as cofactor. Mn(2+) is required as a cofactor. It depends on Zn(2+) as a cofactor. Requires Cu(2+) as cofactor. The cofactor is Mg(2+).

Its subcellular location is the secreted. It carries out the reaction a phosphate monoester + H2O = an alcohol + phosphate. This chain is Purple acid phosphatase 2 (PAP2), found in Ipomoea batatas (Sweet potato).